We begin with the raw amino-acid sequence, 530 residues long: PC4 and SFRS1-interacting protein (530 aa).

The PWWP domain occupies 1–64 (MTRDFKPGDL…PKDIFPYSEN (64 aa)). Residue K75 forms a Glycyl lysine isopeptide (Lys-Gly) (interchain with G-Cter in SUMO2) linkage. Residues 88 to 349 (PKVKFSSQQA…VEKKRETSMD (262 aa)) are disordered. Positions 93-107 (SSQQASAKQSNASSD) are enriched in low complexity. Residues S102, S105, and S106 each carry the phosphoserine modification. Over residues 113 to 135 (KETSVSKEDTDPEEKASNEDVTK) the composition is skewed to basic and acidic residues. 2 positions are modified to phosphothreonine: T115 and T122. Position 129 is a phosphoserine (S129). T141 bears the Phosphothreonine mark. Residues 144 to 153 (AARRGRKRKA) are compositionally biased toward basic residues. The Nuclear localization signal signature appears at 146 to 156 (RRGRKRKAEKQ). T167 carries the post-translational modification Phosphothreonine. Residues S177 and S206 each carry the phosphoserine modification. Basic and acidic residues predominate over residues 213–261 (EEDKSKKKGQEEKQPKKQLKKDEEGQKEEEKPRKEPDKKEGKKEVESKR). Phosphoserine is present on S271. The residue at position 272 (T272) is a Phosphothreonine. S273 and S275 each carry phosphoserine. Over residues 274-283 (DSEEEGDDQE) the composition is skewed to acidic residues. Positions 287–302 (KRKGGRNFQTAHRRNM) are enriched in basic residues. Basic and acidic residues predominate over residues 305-349 (GQHEKEAADRKRKQEEQMETEQQNKDEGKKPEVKKVEKKRETSMD). Coiled coils occupy residues 306–334 (QHEK…EGKK) and 371–395 (NRCI…KHTE). The segment at 340-417 (VEKKRETSMD…VSQVIMEKST (78 aa)) is integrase-binding domain (IBD). S434 is subject to Phosphoserine. At T437 the chain carries Phosphothreonine. S443 bears the Phosphoserine mark. The segment covering 446-473 (EQRQHEEANKTKDQGKKGPNKKLEKEQT) has biased composition (basic and acidic residues). Residues 446–530 (EQRQHEEANK…ISLKDSTLDN (85 aa)) are disordered. A compositionally biased stretch (polar residues) spans 474–494 (GSKTLNGGSDAQDSNQPQHNG). The span at 498–530 (EESKDNHEASSKKKPSSEERETEISLKDSTLDN) shows a compositional bias: basic and acidic residues. Phosphoserine is present on S514. Residue R517 is modified to Citrulline. Residue S522 is modified to Phosphoserine. At T527 the chain carries Phosphothreonine.

The protein belongs to the HDGF family. In terms of assembly, monomer. Interacts with IFRD1/PC4. Interacts (via IBD domain) with POGZ (via IBM motif) and CDCA7L (via IBM motifs). Interacts (via IBD domain) with KMT2A (via IBM motifs) with a moderate affinity whereas interacts with the KMT2A-MEN1 complex with a greater affinity; MEN1 enhances interaction of KMT2A with PSIP1. Interacts (via IBD domain) with IWS1 (via IBM motif), MED1 (via IBM motif) and DBF4 (via IBM motifs). Citrullinated by PADI4.

The protein localises to the nucleus. Functionally, transcriptional coactivator involved in neuroepithelial stem cell differentiation and neurogenesis. Involved in particular in lens epithelial cell gene regulation and stress responses. May play an important role in lens epithelial to fiber cell terminal differentiation. May play a protective role during stress-induced apoptosis. The polypeptide is PC4 and SFRS1-interacting protein (PSIP1) (Bos taurus (Bovine)).